We begin with the raw amino-acid sequence, 144 residues long: uncharacterized protein (144 aa).

Positions 24-67 (KLKELYQRLNQGINVEEVLKETVEDYKEKMEKYILEVLEEIEKY) form a coiled coil.

This is an uncharacterized protein from Aquifex aeolicus (strain VF5).